The sequence spans 809 residues: Lon protease (809 aa).

The Lon N-terminal domain maps to 8–203; that stretch reads LPVVALRNMA…RLCLILADEI (196 aa). 354–361 serves as a coordination point for ATP; it reads GPPGTGKT. Residues 629–809 enclose the Lon proteolytic domain; the sequence is KDEVGIVCGL…MDEVLKHALV (181 aa). Residues Ser-716 and Lys-759 contribute to the active site.

The protein belongs to the peptidase S16 family. In terms of assembly, homohexamer. Organized in a ring with a central cavity.

It is found in the cytoplasm. It carries out the reaction Hydrolysis of proteins in presence of ATP.. Its function is as follows. ATP-dependent serine protease that mediates the selective degradation of mutant and abnormal proteins as well as certain short-lived regulatory proteins. Required for cellular homeostasis and for survival from DNA damage and developmental changes induced by stress. Degrades polypeptides processively to yield small peptide fragments that are 5 to 10 amino acids long. Binds to DNA in a double-stranded, site-specific manner. The sequence is that of Lon protease from Lachnoclostridium phytofermentans (strain ATCC 700394 / DSM 18823 / ISDg) (Clostridium phytofermentans).